We begin with the raw amino-acid sequence, 465 residues long: G1/S-specific cyclin CLN2 (465 aa).

It belongs to the cyclin family.

Essential for the control of the cell cycle at the G1/S (start) transition. Interacts with the CDC28 protein kinase to form MPF. The sequence is that of G1/S-specific cyclin CLN2 (CLN2) from Candida albicans (Yeast).